The sequence spans 379 residues: Mannitol-1-phosphate 5-dehydrogenase (379 aa).

Residue 3–14 participates in NAD(+) binding; the sequence is ALHFGAGNIGRG.

It belongs to the mannitol dehydrogenase family.

The enzyme catalyses D-mannitol 1-phosphate + NAD(+) = beta-D-fructose 6-phosphate + NADH + H(+). This Actinobacillus pleuropneumoniae serotype 5b (strain L20) protein is Mannitol-1-phosphate 5-dehydrogenase.